We begin with the raw amino-acid sequence, 207 residues long: Dephospho-CoA kinase (207 aa).

One can recognise a DPCK domain in the interval 10–207; it reads ILGLTGGIGS…FYLTLSGGQS (198 aa). 18-23 contributes to the ATP binding site; that stretch reads GSGKSA.

Belongs to the CoaE family.

The protein localises to the cytoplasm. It carries out the reaction 3'-dephospho-CoA + ATP = ADP + CoA + H(+). It functions in the pathway cofactor biosynthesis; coenzyme A biosynthesis; CoA from (R)-pantothenate: step 5/5. Catalyzes the phosphorylation of the 3'-hydroxyl group of dephosphocoenzyme A to form coenzyme A. This chain is Dephospho-CoA kinase, found in Pseudomonas fluorescens (strain Pf0-1).